The sequence spans 224 residues: ATP synthase subunit a (224 aa).

The next 6 helical transmembrane spans lie at 17-37, 72-92, 99-119, 125-145, 155-175, and 184-204; these read LSLNWLSTFLGLLMIPSIYWL, IFISLFSLILFNNFMGLFPYI, LTLTLSLALPLWLCFMLYGWI, MFAHLVPQGTPAILMPFMVCI, GTLAVRLTANMIAGHLLLTLL, and YLLVTFLLVAQIALLVLESAV.

This sequence belongs to the ATPase A chain family. As to quaternary structure, F-type ATPases have 2 components, CF(1) - the catalytic core - and CF(0) - the membrane proton channel. CF(1) has five subunits: alpha(3), beta(3), gamma(1), delta(1), epsilon(1). CF(0) has three main subunits: a, b and c.

The protein resides in the mitochondrion inner membrane. Its function is as follows. Mitochondrial membrane ATP synthase (F(1)F(0) ATP synthase or Complex V) produces ATP from ADP in the presence of a proton gradient across the membrane which is generated by electron transport complexes of the respiratory chain. F-type ATPases consist of two structural domains, F(1) - containing the extramembraneous catalytic core and F(0) - containing the membrane proton channel, linked together by a central stalk and a peripheral stalk. During catalysis, ATP synthesis in the catalytic domain of F(1) is coupled via a rotary mechanism of the central stalk subunits to proton translocation. Key component of the proton channel; it may play a direct role in the translocation of protons across the membrane. The protein is ATP synthase subunit a (mt:ATPase6) of Drosophila yakuba (Fruit fly).